The primary structure comprises 371 residues: tRNA-specific 2-thiouridylase MnmA (371 aa).

ATP contacts are provided by residues 8–15 and Met34; that span reads GMSGGVDS. Residues 94 to 96 form an interaction with target base in tRNA region; the sequence is NPD. Residue Cys99 is the Nucleophile of the active site. A disulfide bond links Cys99 and Cys195. Position 123 (Gly123) interacts with ATP. The interval 145–147 is interaction with tRNA; the sequence is KDQ. Catalysis depends on Cys195, which acts as the Cysteine persulfide intermediate. The tract at residues 309 to 310 is interaction with tRNA; it reads RY.

It belongs to the MnmA/TRMU family.

The protein localises to the cytoplasm. The enzyme catalyses S-sulfanyl-L-cysteinyl-[protein] + uridine(34) in tRNA + AH2 + ATP = 2-thiouridine(34) in tRNA + L-cysteinyl-[protein] + A + AMP + diphosphate + H(+). In terms of biological role, catalyzes the 2-thiolation of uridine at the wobble position (U34) of tRNA, leading to the formation of s(2)U34. This chain is tRNA-specific 2-thiouridylase MnmA, found in Methylococcus capsulatus (strain ATCC 33009 / NCIMB 11132 / Bath).